A 310-amino-acid chain; its full sequence is Homeobox protein dsc-1 (310 aa).

The segment at residues 180-239 is a DNA-binding region (homeobox); it reads RRRFRTNFTELQSTFLEDSFKESHYPDHKAKKYMADFLKIPEDRITVWFQNRRAKWRRKE. The tract at residues 262–310 is disordered; it reads CFSAQHPDDGPNAKHPNSFGIPNQPMSLDQFPMNTEQDFPEFPSLQEHQ. Residues 281-298 show a composition bias toward polar residues; sequence GIPNQPMSLDQFPMNTEQ.

Expressed in the bilateral sensory neurons AWA, AWB, AWC, ASE, FLP and PVD. Also expressed in the enteric intestinal and anal depressor muscles.

The protein resides in the nucleus. It is found in the cell projection. The protein localises to the axon. Its subcellular location is the cytoplasm. Its function is as follows. Transcriptional regulator which plays a role in the expulsion step of defecation by controlling enteric muscle-specific expression of exp-1 which is required for enteric muscle contraction. Not required for exp-1 expression in the PDA neuron. Also involved in controlling the length of the defecation cycle. The protein is Homeobox protein dsc-1 of Caenorhabditis elegans.